A 327-amino-acid chain; its full sequence is MVREKVKVSTRTLQWKCVESRKDSKRLYYGRFILSPLMKGQADTIGIAMRRALLGEIEGTCITRAKSENIPHDYSNIVGIQESVHEILMNLNEIVLRSNLYGTRNALICVQGPGYITAQDIILPPSVEIIDNTQHIATLTEPIDLCIELKIERNRGYSLKMSNNFEDRSYPIDAVFMPVQNANHSIHSYGNGNEKQEILFLEIWTNGSLTPKEALHEASRNLINLFIPFLHVEEETFYLENNQHQVTLPLFPFHNRLVNLRKKKKELAFQYIFIDQLELPPRIYNCLKKSNIHTLLDLLNNSQEDLIKIEHFHMEDVKKILDILEKK.

The tract at residues M1–E233 is alpha N-terminal domain (alpha-NTD). An alpha C-terminal domain (alpha-CTD) region spans residues L267–K327.

Belongs to the RNA polymerase alpha chain family. In plastids the minimal PEP RNA polymerase catalytic core is composed of four subunits: alpha, beta, beta', and beta''. When a (nuclear-encoded) sigma factor is associated with the core the holoenzyme is formed, which can initiate transcription.

Its subcellular location is the plastid. The protein localises to the chloroplast. The catalysed reaction is RNA(n) + a ribonucleoside 5'-triphosphate = RNA(n+1) + diphosphate. In terms of biological role, DNA-dependent RNA polymerase catalyzes the transcription of DNA into RNA using the four ribonucleoside triphosphates as substrates. In Lobularia maritima (Sweet alyssum), this protein is DNA-directed RNA polymerase subunit alpha.